A 942-amino-acid polypeptide reads, in one-letter code: Leucine--tRNA ligase 1 (942 aa).

The short motif at 39–49 (PYTNSPLHIGH) is the 'HIGH' region element. The 'KMSKS' region motif lies at 624-628 (KMSKS). Lysine 627 lines the ATP pocket.

Belongs to the class-I aminoacyl-tRNA synthetase family.

It is found in the cytoplasm. The catalysed reaction is tRNA(Leu) + L-leucine + ATP = L-leucyl-tRNA(Leu) + AMP + diphosphate. The sequence is that of Leucine--tRNA ligase 1 from Sulfolobus acidocaldarius (strain ATCC 33909 / DSM 639 / JCM 8929 / NBRC 15157 / NCIMB 11770).